A 756-amino-acid chain; its full sequence is ATP-dependent 6-phosphofructokinase 2 (756 aa).

The segment at 1 to 393 (MEQKFKKGKD…KQTYLNFVSI (393 aa)) is N-terminal catalytic PFK domain 1. ATP-binding positions include G20, 81–82 (RC), and 111–114 (GDGS). D112 is a Mg(2+) binding site. Substrate is bound by residues 157 to 159 (SID), R194, 201 to 203 (MGR), E257, R285, and 291 to 294 (HLQR). The Proton acceptor role is filled by D159. The interval 394 to 404 (PLSTTMPSRTK) is interdomain linker. Residues 405–756 (TFAVVHIGSP…KKPQEAVLSS (352 aa)) form a C-terminal regulatory PFK domain 2 region. Beta-D-fructose 2,6-bisphosphate-binding positions include R474, 530-534 (TISNN), 575-577 (MGS), E632, R658, and 664-667 (YSQL).

The protein belongs to the phosphofructokinase type A (PFKA) family. ATP-dependent PFK group I subfamily. Eukaryotic two domain clade 'E' sub-subfamily. In terms of assembly, homotetramer. Mg(2+) is required as a cofactor.

Its subcellular location is the cytoplasm. The enzyme catalyses beta-D-fructose 6-phosphate + ATP = beta-D-fructose 1,6-bisphosphate + ADP + H(+). It participates in carbohydrate degradation; glycolysis; D-glyceraldehyde 3-phosphate and glycerone phosphate from D-glucose: step 3/4. Allosterically activated by ADP, AMP, or fructose 2,6-bisphosphate, and allosterically inhibited by ATP or citrate. Catalyzes the phosphorylation of D-fructose 6-phosphate to fructose 1,6-bisphosphate by ATP, the first committing step of glycolysis. This is ATP-dependent 6-phosphofructokinase 2 from Caenorhabditis elegans.